The following is a 436-amino-acid chain: Probable cinnamyl alcohol dehydrogenase 8B (436 aa).

Zn(2+) is bound at residue cysteine 120. Threonine 122 is an NADP(+) binding site. Zn(2+) contacts are provided by histidine 142, glutamate 143, cysteine 173, cysteine 176, cysteine 179, cysteine 187, and cysteine 236. NADP(+) is bound by residues threonine 240, 261-266, 284-289, threonine 324, glycine 348, and 371-373; these read GLGGLG, STSPGK, and NCV.

It belongs to the zinc-containing alcohol dehydrogenase family. In terms of assembly, homodimer. Requires Zn(2+) as cofactor.

It carries out the reaction (E)-cinnamyl alcohol + NADP(+) = (E)-cinnamaldehyde + NADPH + H(+). It catalyses the reaction (E)-coniferol + NADP(+) = (E)-coniferaldehyde + NADPH + H(+). The catalysed reaction is (E)-sinapyl alcohol + NADP(+) = (E)-sinapaldehyde + NADPH + H(+). The enzyme catalyses (E)-4-coumaroyl alcohol + NADP(+) = (E)-4-coumaraldehyde + NADPH + H(+). It carries out the reaction (E)-caffeyl alcohol + NADP(+) = (E)-caffeyl aldehyde + NADPH + H(+). It participates in aromatic compound metabolism; phenylpropanoid biosynthesis. Functionally, involved in lignin biosynthesis. Catalyzes the final step specific for the production of lignin monomers. Catalyzes the NADPH-dependent reduction of coniferaldehyde, 5-hydroxyconiferaldehyde, sinapaldehyde, 4-coumaraldehyde and caffeyl aldehyde to their respective alcohols. The sequence is that of Probable cinnamyl alcohol dehydrogenase 8B from Oryza sativa subsp. japonica (Rice).